The following is a 132-amino-acid chain: CLAVATA3/ESR (CLE)-related protein 2-B (132 aa).

The first 26 residues, 1–26 (MASRMGMVAILSLFVCALVASTSVNA), serve as a signal peptide directing secretion. A disordered region spans residues 68–132 (NRASKQLDRE…IGPPPFLDRY (65 aa)). Hydroxyproline occurs at positions 82 and 85. Proline 85 carries O-linked (Ara...) hydroxyproline glycosylation.

It belongs to the CLV3/ESR signal peptide family. The O-glycosylation (arabinosylation) of the hydroxyproline Pro-85 enhances binding affinity of the ESR2Bp peptide for its receptor. In terms of tissue distribution, seed endosperm.

It is found in the secreted. The protein localises to the extracellular space. Extracellular signal peptide that regulates cell fate. This is CLAVATA3/ESR (CLE)-related protein 2-B from Zea mays (Maize).